A 359-amino-acid chain; its full sequence is Patr class I histocompatibility antigen, B-1 alpha chain (359 aa).

The N-terminal stretch at 1-20 is a signal peptide; sequence APRTVLLLLSAALALTETWA. Positions 21-110 are alpha-1; that stretch reads GSHSMRYFYT…ALRYYNQSEA (90 aa). At 21–305 the chain is on the extracellular side; the sequence is GSHSMRYFYT…PSSQSTIPIV (285 aa). N-linked (GlcNAc...) asparagine glycosylation occurs at N106. Positions 111-202 are alpha-2; that stretch reads GSHTWQTMYG…ENGKETLQRA (92 aa). 2 disulfides stabilise this stretch: C121–C184 and C223–C279. Positions 203 to 294 are alpha-3; the sequence is DPPKTHVTHH…GLPKPLTLRW (92 aa). In terms of domain architecture, Ig-like C1-type spans 205-291; sequence PKTHVTHHPI…QHEGLPKPLT (87 aa). Positions 295 to 305 are connecting peptide; sequence EPSSQSTIPIV. Residues 306-329 traverse the membrane as a helical segment; that stretch reads GIVAGLAVLVVTVAVVAVVAAVMC. Residues 330 to 359 are Cytoplasmic-facing; sequence RRKSSGGKGGSYSQAASSDSAQGSDVSLTA. Residues 332–359 are disordered; it reads KSSGGKGGSYSQAASSDSAQGSDVSLTA. Residues 340 to 359 are compositionally biased toward low complexity; it reads SYSQAASSDSAQGSDVSLTA. Phosphoserine occurs at positions 353 and 356.

This sequence belongs to the MHC class I family. In terms of assembly, heterodimer of an alpha chain and a beta chain (beta-2-microglobulin).

Its subcellular location is the membrane. Functionally, involved in the presentation of foreign antigens to the immune system. In Pan troglodytes (Chimpanzee), this protein is Patr class I histocompatibility antigen, B-1 alpha chain.